Reading from the N-terminus, the 107-residue chain is MKLSVVLALFIIFQLGAASLMRNWMFDFEKELEHDYDDSEIGFHNIHSLMARSRRGDKVKICGTKVLKMVMVMCGGECSSTNENIATECCEKMCTMEDITTKCCPSR.

The N-terminal stretch at 1-19 is a signal peptide; that stretch reads MKLSVVLALFIIFQLGAAS. Residues 20 to 55 constitute a propeptide that is removed on maturation; that stretch reads LMRNWMFDFEKELEHDYDDSEIGFHNIHSLMARSRR. Cystine bridges form between cysteine 62-cysteine 90, cysteine 74-cysteine 103, cysteine 78-cysteine 104, and cysteine 89-cysteine 94.

The protein belongs to the insulin family.

It localises to the secreted. The polypeptide is Probable insulin-like peptide beta-type 3 (ins-3) (Caenorhabditis elegans).